Here is a 276-residue protein sequence, read N- to C-terminus: NH(3)-dependent NAD(+) synthetase (276 aa).

43 to 50 is a binding site for ATP; that stretch reads GISGGVDS. Mg(2+) is bound at residue aspartate 49. Arginine 146 contacts deamido-NAD(+). Threonine 166 provides a ligand contact to ATP. Glutamate 171 lines the Mg(2+) pocket. Lysine 179 and aspartate 186 together coordinate deamido-NAD(+). Residues lysine 195 and threonine 217 each contribute to the ATP site. 266-267 serves as a coordination point for deamido-NAD(+); that stretch reads HK.

It belongs to the NAD synthetase family. In terms of assembly, homodimer.

It carries out the reaction deamido-NAD(+) + NH4(+) + ATP = AMP + diphosphate + NAD(+) + H(+). It functions in the pathway cofactor biosynthesis; NAD(+) biosynthesis; NAD(+) from deamido-NAD(+) (ammonia route): step 1/1. In terms of biological role, catalyzes the ATP-dependent amidation of deamido-NAD to form NAD. Uses ammonia as a nitrogen source. The protein is NH(3)-dependent NAD(+) synthetase of Shewanella piezotolerans (strain WP3 / JCM 13877).